The chain runs to 181 residues: Inner membrane-spanning protein YciB (181 aa).

5 helical membrane passes run 22 to 42, 50 to 70, 72 to 92, 118 to 138, and 148 to 168; these read IYTATGALIAATAVQIAILYF, MHLVTFAMVTVFGTLTLAFHD, AFIKWKVTIIYSLFAIALAVS, VTWYWALFFIGCGVLNVYVAF, and FKVFGLTALTLLNTVISVFYI.

The protein belongs to the YciB family.

The protein localises to the cell inner membrane. In terms of biological role, plays a role in cell envelope biogenesis, maintenance of cell envelope integrity and membrane homeostasis. This is Inner membrane-spanning protein YciB from Shewanella denitrificans (strain OS217 / ATCC BAA-1090 / DSM 15013).